The primary structure comprises 379 residues: Botryococcene C-methyltransferase (379 aa).

The helical transmembrane segment at L17–I37 threads the bilayer.

This sequence belongs to the class I-like SAM-binding methyltransferase superfamily. Erg6/SMT family.

It localises to the microsome membrane. It carries out the reaction C30 botryococcene + 2 S-adenosyl-L-methionine = 3,20-dimethyl-1,2,21,22-tetradehydro-2,3,20,21-tetrahydrobotryococcene + 2 S-adenosyl-L-homocysteine + 2 H(+). In terms of biological role, converts botryococcene to mono- and dimethyl derivatives, but not to tri- and tetramethylated products. Unable to methylate cycloartenol, zymosterol or lanosterol, but can also use squalene as substrate. Methylates both C-3 and C22 positions, but only C-3 position in monomethylated squalenes. In contrast, monomethylated botryococcene occured mainly at the C-20 position yielding showacene, but also at the C-3 position yielding isoshowacene. The protein is Botryococcene C-methyltransferase (TMT-3) of Botryococcus braunii (Green alga).